The chain runs to 312 residues: uncharacterized protein (312 aa).

The next 10 helical transmembrane spans lie at 13–33 (AAGT…SIWI), 45–65 (AVLL…FLIY), 81–101 (ACGA…IGLN), 105–125 (AMVE…FTAC), 133–153 (IQDL…LGGW), 162–182 (MIGA…LVLS), 198–218 (GMTA…AAGM), 229–249 (MYGL…VLML), 260–280 (AAAI…LFLG), and 283–303 (LGLI…GMEY). The 131-residue stretch at 173 to 303 (AVYAGYLVLS…VFFVITGMEY (131 aa)) folds into the EamA domain.

This sequence belongs to the EamA transporter family.

The protein resides in the cell membrane. This is an uncharacterized protein from Bacillus subtilis (strain 168).